The following is a 439-amino-acid chain: MFFHATLARSFISALSVRGDDDAVDRLNYYYTPLILAVCCLVISAKQYGGTPIECWVNPHSRESMEEYIESYCWIQNTYWIPMYENVPDDHTAREEKQIGYYQWVPFILIAEALMFSLPCIFWRLCSFQSGLNIQTLINAACDAQALLDYSDRQKAVEAITCNFVDNLDLQSPNGRIRARGWIARIKFSRFLSGQCISIVYSFTKLLYSVNVVAQFFILNACLKSSEFVFFGFQVLSDIWAGRPWTETGHFPRVTLCDFEVRYLANLNRYTVQCALLINIINEKVFAFLWCWYMILAIITTCSFIYWIANSFIHSEKVDYVMKFIQIAESSEYKKLQKFEKDATVERLYTVIAFAPHLLDSFVSDFLKSDGILMLRMISNHAGDMIVVQLVRNLWQEYRERNWREFEEHEEMKDVEMRRIQGTRERIVIANPGQTKSFL.

4 helical membrane-spanning segments follow: residues 33-53 (PLIL…GTPI), 103-123 (QWVP…CIFW), 199-219 (IVYS…FFIL), and 285-305 (VFAF…CSFI).

It belongs to the pannexin family.

The protein localises to the cell membrane. It is found in the cell junction. Its subcellular location is the gap junction. Its function is as follows. Structural component of the gap junctions that specifically coordinates left-right asymmetry in the developing nervous system. Acts by forming gap junction network linking embryonic neurons and providing electrical coupling between cells, leading to promote or inhibit AWC signaling. The chain is Innexin-19 (inx-19) from Caenorhabditis briggsae.